The following is a 1058-amino-acid chain: Carbamoyl phosphate synthase large chain (1058 aa).

Positions 1 to 401 are carboxyphosphate synthetic domain; sequence MPKRKDIQKI…SLLKACRSLE (401 aa). Arginine 129, arginine 169, glycine 175, glycine 176, arginine 208, isoleucine 210, glutamate 215, glycine 241, isoleucine 242, histidine 243, glutamine 284, and glutamate 298 together coordinate ATP. Positions 133–327 constitute an ATP-grasp 1 domain; the sequence is KQLMQELDQP…IAKLAAKIAV (195 aa). Glutamine 284, glutamate 298, and asparagine 300 together coordinate Mg(2+). Mn(2+)-binding residues include glutamine 284, glutamate 298, and asparagine 300. The segment at 402–546 is oligomerization domain; the sequence is IGVCHNEMTS…YSTYELENES (145 aa). Residues 547–929 are carbamoyl phosphate synthetic domain; the sequence is VQSNKESILV…ALYKAFEANN (383 aa). One can recognise an ATP-grasp 2 domain in the interval 671–861; the sequence is EKALKELGIP…MAQIATKLIL (191 aa). Residues arginine 707, serine 746, isoleucine 748, glutamate 752, glycine 777, valine 778, histidine 779, serine 780, glutamine 820, and glutamate 832 each coordinate ATP. Mg(2+)-binding residues include glutamine 820, glutamate 832, and asparagine 834. 3 residues coordinate Mn(2+): glutamine 820, glutamate 832, and asparagine 834. One can recognise an MGS-like domain in the interval 930–1058; the sequence is SHLSEFGQIV…ESRCFNIEAI (129 aa). The segment at 930-1058 is allosteric domain; the sequence is SHLSEFGQIV…ESRCFNIEAI (129 aa).

It belongs to the CarB family. Composed of two chains; the small (or glutamine) chain promotes the hydrolysis of glutamine to ammonia, which is used by the large (or ammonia) chain to synthesize carbamoyl phosphate. Tetramer of heterodimers (alpha,beta)4. It depends on Mg(2+) as a cofactor. Mn(2+) is required as a cofactor.

It carries out the reaction hydrogencarbonate + L-glutamine + 2 ATP + H2O = carbamoyl phosphate + L-glutamate + 2 ADP + phosphate + 2 H(+). The enzyme catalyses hydrogencarbonate + NH4(+) + 2 ATP = carbamoyl phosphate + 2 ADP + phosphate + 2 H(+). It participates in amino-acid biosynthesis; L-arginine biosynthesis; carbamoyl phosphate from bicarbonate: step 1/1. Its pathway is pyrimidine metabolism; UMP biosynthesis via de novo pathway; (S)-dihydroorotate from bicarbonate: step 1/3. In terms of biological role, large subunit of the glutamine-dependent carbamoyl phosphate synthetase (CPSase). CPSase catalyzes the formation of carbamoyl phosphate from the ammonia moiety of glutamine, carbonate, and phosphate donated by ATP, constituting the first step of 2 biosynthetic pathways, one leading to arginine and/or urea and the other to pyrimidine nucleotides. The large subunit (synthetase) binds the substrates ammonia (free or transferred from glutamine from the small subunit), hydrogencarbonate and ATP and carries out an ATP-coupled ligase reaction, activating hydrogencarbonate by forming carboxy phosphate which reacts with ammonia to form carbamoyl phosphate. The polypeptide is Carbamoyl phosphate synthase large chain (Streptococcus pyogenes serotype M3 (strain ATCC BAA-595 / MGAS315)).